The sequence spans 201 residues: Retinol-binding protein 4 (201 aa).

The first 18 residues, 1–18 (MEWVWALVLLAALGGGSA), serve as a signal peptide directing secretion. 3 disulfide bridges follow: C22-C178, C88-C192, and C138-C147. Q116 contributes to the substrate binding site. R139 bears the Omega-N-methylarginine mark.

This sequence belongs to the calycin superfamily. Lipocalin family. As to quaternary structure, interacts with TTR. Interaction with TTR prevents its loss by filtration through the kidney glomeruli. Interacts with STRA6. As to expression, detected in blood plasma (at protein level).

Its subcellular location is the secreted. In terms of biological role, retinol-binding protein that mediates retinol transport in blood plasma. Delivers retinol from the liver stores to the peripheral tissues. Transfers the bound all-trans retinol to STRA6, that then facilitates retinol transport across the cell membrane. The sequence is that of Retinol-binding protein 4 (Rbp4) from Rattus norvegicus (Rat).